The primary structure comprises 488 residues: Probable 26S proteasome non-ATPase regulatory subunit 3 (488 aa).

The disordered stretch occupies residues 1–20; it reads MTQDVEMKEQAAPPSNSLSS. In terms of domain architecture, PCI spans 240–421; sequence SRYLFYLGKI…GWMVSKETGD (182 aa). A disordered region spans residues 452–488; that stretch reads FPPNSHKEKESAEKRRERQQQEQELAKHIAEEDDDDF. Positions 456-481 are enriched in basic and acidic residues; that stretch reads SHKEKESAEKRRERQQQEQELAKHIA.

The protein belongs to the proteasome subunit S3 family. As to quaternary structure, the 26S proteasome is composed of a core protease, known as the 20S proteasome, capped at one or both ends by the 19S regulatory complex (RC). The RC is composed of at least 18 different subunits in two subcomplexes, the base and the lid, which form the portions proximal and distal to the 20S proteolytic core, respectively.

It is found in the nucleus. Functionally, acts as a regulatory subunit of the 26 proteasome which is involved in the ATP-dependent degradation of ubiquitinated proteins. The sequence is that of Probable 26S proteasome non-ATPase regulatory subunit 3 (21D7) from Nicotiana tabacum (Common tobacco).